Here is a 118-residue protein sequence, read N- to C-terminus: Large ribosomal subunit protein uL24 (118 aa).

Belongs to the universal ribosomal protein uL24 family. Part of the 50S ribosomal subunit.

One of two assembly initiator proteins, it binds directly to the 5'-end of the 23S rRNA, where it nucleates assembly of the 50S subunit. Functionally, one of the proteins that surrounds the polypeptide exit tunnel on the outside of the subunit. The sequence is that of Large ribosomal subunit protein uL24 from Prochlorococcus marinus (strain NATL1A).